Reading from the N-terminus, the 770-residue chain is Proprotein convertase subtilisin/kexin type 7 (770 aa).

The N-terminal stretch at 1-36 is a signal peptide; that stretch reads MPKGRQKVPHLDAHLGLPICLWLELAIFFLVPQVMG. The propeptide occupies 37 to 140; that stretch reads LSEAGGLDIL…EQTLLKRAKR (104 aa). Residues 141 to 666 are Extracellular-facing; the sequence is SIHFNDPKYP…YTITPNTLKT (526 aa). A Peptidase S8 domain is found at 152 to 472; that stretch reads QWHLNNRRSP…FGLLNAWRLV (321 aa). N-linked (GlcNAc...) asparagine glycans are attached at residues Asn-166 and Asn-174. Residue Asp-186 is the Charge relay system of the active site. The interval 195–228 is disordered; sequence DIAPNYSPEGSYDLNSNDPDPMPHPDEENGNHHG. The segment covering 215-225 has biased composition (basic and acidic residues); it reads PMPHPDEENGN. The Charge relay system role is filled by His-227. N-linked (GlcNAc...) asparagine glycosylation is present at Asn-240. The active-site Charge relay system is the Ser-405. The P/Homo B domain occupies 480-617; sequence SVPYLASYVS…QLTLYGSMWS (138 aa). N-linked (GlcNAc...) asparagine glycosylation is present at Asn-510. The helical transmembrane segment at 667 to 687 threads the bilayer; sequence LVLVGCFSVFWTIYYMLEVCL. The Cytoplasmic segment spans residues 688–770; that stretch reads SQRNKASTHG…LLQGKSGQIC (83 aa).

Belongs to the peptidase S8 family. Ca(2+) serves as cofactor. In terms of tissue distribution, widely expressed. Expressed in brain, lung, muscle, heart, liver, kidney, spleen and thymus.

The protein resides in the golgi apparatus. Its subcellular location is the trans-Golgi network membrane. Its activity is regulated as follows. Inhibited by zinc and copper. Its function is as follows. Serine endoprotease that processes various proproteins by cleavage at paired basic amino acids, recognizing the RXXX[KR]R consensus motif. Likely functions in the constitutive secretory pathway. This Mus musculus (Mouse) protein is Proprotein convertase subtilisin/kexin type 7 (Pcsk7).